A 351-amino-acid chain; its full sequence is Phosphoribosylformylglycinamidine cyclo-ligase (351 aa).

Belongs to the AIR synthase family.

It localises to the cytoplasm. It catalyses the reaction 2-formamido-N(1)-(5-O-phospho-beta-D-ribosyl)acetamidine + ATP = 5-amino-1-(5-phospho-beta-D-ribosyl)imidazole + ADP + phosphate + H(+). Its pathway is purine metabolism; IMP biosynthesis via de novo pathway; 5-amino-1-(5-phospho-D-ribosyl)imidazole from N(2)-formyl-N(1)-(5-phospho-D-ribosyl)glycinamide: step 2/2. This is Phosphoribosylformylglycinamidine cyclo-ligase from Xylella fastidiosa (strain 9a5c).